The chain runs to 219 residues: Oligoribonuclease (219 aa).

Positions 19-184 (LVWVDLEMTG…ADIVESIREL (166 aa)) constitute an Exonuclease domain. Y141 is a catalytic residue.

Belongs to the oligoribonuclease family.

The protein localises to the cytoplasm. 3'-to-5' exoribonuclease specific for small oligoribonucleotides. The protein is Oligoribonuclease of Corynebacterium glutamicum (strain R).